A 140-amino-acid chain; its full sequence is Lysozyme c-1 (140 aa).

Residues methionine 1–alanine 20 form the signal peptide. Positions lysine 21–phenylalanine 140 constitute a C-type lysozyme domain. Disulfide bonds link cysteine 26-cysteine 139, cysteine 47-cysteine 128, cysteine 81-cysteine 94, and cysteine 90-cysteine 108. Residues glutamate 52 and aspartate 69 contribute to the active site.

It belongs to the glycosyl hydrolase 22 family. Expressed in salivary glands and Malpighian tubules.

The catalysed reaction is Hydrolysis of (1-&gt;4)-beta-linkages between N-acetylmuramic acid and N-acetyl-D-glucosamine residues in a peptidoglycan and between N-acetyl-D-glucosamine residues in chitodextrins.. In terms of biological role, lysozymes have primarily a bacteriolytic function; those in tissues and body fluids are associated with the monocyte-macrophage system and enhance the activity of immunoagents. This chain is Lysozyme c-1, found in Anopheles gambiae (African malaria mosquito).